A 42-amino-acid chain; its full sequence is uncharacterized protein (42 aa).

The protein localises to the plastid. It is found in the chloroplast. This is an uncharacterized protein from Diacronema lutheri (Unicellular marine alga).